Reading from the N-terminus, the 165-residue chain is Myosin regulatory light chain 2B, cardiac muscle isoform (165 aa).

Ala2 carries the n,N,N-trimethylalanine modification. 3 EF-hand domains span residues 23 to 58 (TQIQ…LGRL), 93 to 128 (DPEE…QEGR), and 129 to 164 (FSQE…GEEK). Ca(2+) is bound by residues Asp36, Asn38, Asp40, and Asp47.

As to quaternary structure, myosin is a hexamer of 2 heavy chains and 4 light chains. The N-terminus is blocked. N,N,N-trimethylalanine, found in other myosin light chains would not have been detected in the N-terminal tryptic peptide in PubMed:7319048 because it would remain trimethylated and ninhydrin negative after hydrolysis.

The polypeptide is Myosin regulatory light chain 2B, cardiac muscle isoform (Gallus gallus (Chicken)).